Consider the following 504-residue polypeptide: ATP synthase subunit alpha (504 aa).

An ATP-binding site is contributed by 172–179 (GDRQTGKT).

This sequence belongs to the ATPase alpha/beta chains family. As to quaternary structure, F-type ATPases have 2 components, CF(1) - the catalytic core - and CF(0) - the membrane proton channel. CF(1) has five subunits: alpha(3), beta(3), gamma(1), delta(1), epsilon(1). CF(0) has three main subunits: a(1), b(2) and c(9-12). The alpha and beta chains form an alternating ring which encloses part of the gamma chain. CF(1) is attached to CF(0) by a central stalk formed by the gamma and epsilon chains, while a peripheral stalk is formed by the delta and b chains.

Its subcellular location is the cell inner membrane. The enzyme catalyses ATP + H2O + 4 H(+)(in) = ADP + phosphate + 5 H(+)(out). Produces ATP from ADP in the presence of a proton gradient across the membrane. The alpha chain is a regulatory subunit. In Petrotoga mobilis (strain DSM 10674 / SJ95), this protein is ATP synthase subunit alpha.